A 704-amino-acid chain; its full sequence is Polyribonucleotide nucleotidyltransferase (704 aa).

Mg(2+)-binding residues include Asp-486 and Asp-492. The 60-residue stretch at 553–612 folds into the KH domain; it reads PKIVIVKINPDKIRDVIGPGGKQINKIIEETGVKIDTEQDGTIYISSANEEMNARAKQII. Residues 622 to 690 enclose the S1 motif domain; it reads GEYYLSTVKR…KQGRVNLSRK (69 aa).

Belongs to the polyribonucleotide nucleotidyltransferase family. The cofactor is Mg(2+).

It is found in the cytoplasm. The enzyme catalyses RNA(n+1) + phosphate = RNA(n) + a ribonucleoside 5'-diphosphate. Its function is as follows. Involved in mRNA degradation. Catalyzes the phosphorolysis of single-stranded polyribonucleotides processively in the 3'- to 5'-direction. This is Polyribonucleotide nucleotidyltransferase from Lysinibacillus sphaericus (strain C3-41).